The primary structure comprises 209 residues: Phosphopantothenoylcysteine decarboxylase (209 aa).

Residues 28–30 and 53–55 each bind FMN; these read GSV and TKS. The active-site Proton donor is H90. FMN contacts are provided by residues 106 to 109 and A140; that span reads SANT. N-[(R)-4-phosphopantothenoyl]-L-cysteine-binding residues include N142, R172, and A174. C175 functions as the Proton donor in the catalytic mechanism. M183 contributes to the N-[(R)-4-phosphopantothenoyl]-L-cysteine binding site.

It belongs to the HFCD (homooligomeric flavin containing Cys decarboxylase) superfamily. Homotrimer. FMN serves as cofactor. Expressed in roots, shoots, leaves, flowers, developing siliques and seeds with highest expression in seed embryos and phloem.

It carries out the reaction N-[(R)-4-phosphopantothenoyl]-L-cysteine + H(+) = (R)-4'-phosphopantetheine + CO2. Its pathway is cofactor biosynthesis; coenzyme A biosynthesis; CoA from (R)-pantothenate: step 3/5. Involved in plant growth, and salt and osmotic tolerance. Catalyzes the decarboxylation of 4'-phosphopantothenoylcysteine to 4'-phosphopantetheine, a key step in coenzyme A biosynthesis. The enzyme is also able to decarboxylate pantothenoylcysteine to pantothenoylcysteamine. The polypeptide is Phosphopantothenoylcysteine decarboxylase (Arabidopsis thaliana (Mouse-ear cress)).